Reading from the N-terminus, the 129-residue chain is Large ribosomal subunit protein eL32 (129 aa).

Belongs to the eukaryotic ribosomal protein eL32 family.

The sequence is that of Large ribosomal subunit protein eL32 (rpl32e) from Archaeoglobus fulgidus (strain ATCC 49558 / DSM 4304 / JCM 9628 / NBRC 100126 / VC-16).